The chain runs to 214 residues: Large ribosomal subunit protein bL25 (214 aa).

A disordered region spans residues 187–214 (AEVAPSIEETVEPEVIKKGKKAEEEEEK). Residues 200-214 (EVIKKGKKAEEEEEK) are compositionally biased toward basic and acidic residues.

It belongs to the bacterial ribosomal protein bL25 family. CTC subfamily. In terms of assembly, part of the 50S ribosomal subunit; part of the 5S rRNA/L5/L18/L25 subcomplex. Contacts the 5S rRNA. Binds to the 5S rRNA independently of L5 and L18.

Its function is as follows. This is one of the proteins that binds to the 5S RNA in the ribosome where it forms part of the central protuberance. This chain is Large ribosomal subunit protein bL25, found in Thermodesulfovibrio yellowstonii (strain ATCC 51303 / DSM 11347 / YP87).